The chain runs to 394 residues: Putative agmatinase 1 (394 aa).

Positions 1–20 (MALQSLFLILLAGAAQLAQA) are cleaved as a signal peptide. Mn(2+)-binding residues include His-186, Asp-209, His-211, Asp-213, Asp-307, and Asp-309.

Belongs to the arginase family. Mn(2+) serves as cofactor.

The enzyme catalyses agmatine + H2O = urea + putrescine. The polypeptide is Putative agmatinase 1 (Schizosaccharomyces pombe (strain 972 / ATCC 24843) (Fission yeast)).